The primary structure comprises 321 residues: Glucokinase (321 aa).

ATP is bound at residue 8 to 13 (GDVGGT).

The protein belongs to the bacterial glucokinase family.

It localises to the cytoplasm. The catalysed reaction is D-glucose + ATP = D-glucose 6-phosphate + ADP + H(+). The polypeptide is Glucokinase (Citrobacter koseri (strain ATCC BAA-895 / CDC 4225-83 / SGSC4696)).